Consider the following 245-residue polypeptide: Triosephosphate isomerase (245 aa).

A substrate-binding site is contributed by 9 to 11; it reads NWK. The Electrophile role is filled by His-92. Catalysis depends on Glu-164, which acts as the Proton acceptor. Substrate-binding positions include Gly-170, Ser-209, and 230 to 231; that span reads GG.

It belongs to the triosephosphate isomerase family. In terms of assembly, homodimer.

The protein resides in the cytoplasm. It carries out the reaction D-glyceraldehyde 3-phosphate = dihydroxyacetone phosphate. The protein operates within carbohydrate biosynthesis; gluconeogenesis. It functions in the pathway carbohydrate degradation; glycolysis; D-glyceraldehyde 3-phosphate from glycerone phosphate: step 1/1. Involved in the gluconeogenesis. Catalyzes stereospecifically the conversion of dihydroxyacetone phosphate (DHAP) to D-glyceraldehyde-3-phosphate (G3P). This chain is Triosephosphate isomerase, found in Cupriavidus necator (strain ATCC 17699 / DSM 428 / KCTC 22496 / NCIMB 10442 / H16 / Stanier 337) (Ralstonia eutropha).